Consider the following 201-residue polypeptide: 3-isopropylmalate dehydratase small subunit (201 aa).

Belongs to the LeuD family. LeuD type 1 subfamily. In terms of assembly, heterodimer of LeuC and LeuD.

It carries out the reaction (2R,3S)-3-isopropylmalate = (2S)-2-isopropylmalate. Its pathway is amino-acid biosynthesis; L-leucine biosynthesis; L-leucine from 3-methyl-2-oxobutanoate: step 2/4. Its function is as follows. Catalyzes the isomerization between 2-isopropylmalate and 3-isopropylmalate, via the formation of 2-isopropylmaleate. The sequence is that of 3-isopropylmalate dehydratase small subunit from Cytophaga hutchinsonii (strain ATCC 33406 / DSM 1761 / CIP 103989 / NBRC 15051 / NCIMB 9469 / D465).